A 589-amino-acid chain; its full sequence is Mitogen-activated protein kinase 8 (589 aa).

The interval 18-56 (RPSSSSSSSSSNNNNNNHEQPIFNSSSFSSSSNPNHSAN) is disordered. 2 stretches are compositionally biased toward low complexity: residues 20-34 (SSSS…NNNN) and 41-56 (NSSS…HSAN). A Protein kinase domain is found at 104 to 395 (YQIQEVVGKG…AEDALADPYF (292 aa)). Residues 110–118 (VGKGSYGVV) and lysine 133 each bind ATP. The active-site Proton acceptor is aspartate 230. At threonine 266 the chain carries Phosphothreonine. The TXY signature appears at 266 to 268 (TDY). Position 268 is a phosphotyrosine (tyrosine 268). Position 271 is a phosphothreonine (threonine 271). The segment at 474-589 (NQGKPGAAGG…TDKVASLHNS (116 aa)) is disordered.

This sequence belongs to the protein kinase superfamily. CMGC Ser/Thr protein kinase family. MAP kinase subfamily. Interacts with CAM3, CAM4 and CAM7 in an calcium-dependent manner. In terms of processing, dually phosphorylated on Thr-266 and Tyr-268, which activates the enzyme. Autophosphorylated. Ubiquitous.

The enzyme catalyses L-seryl-[protein] + ATP = O-phospho-L-seryl-[protein] + ADP + H(+). It carries out the reaction L-threonyl-[protein] + ATP = O-phospho-L-threonyl-[protein] + ADP + H(+). Its activity is regulated as follows. Activated by threonine and tyrosine phosphorylation. Activated by two independent mechanisms, the binding of CAMs in a calcium-dependent manner and the phosphorylation by MAP kinase kinase MKK3. Activated in response to mechanical wounding, hydrogen peroxide and jasmonic acid (JA). MKK3-MPK8 and CAMs-MPK8 modules negatively regulates ROS accumulation through controlling expression of the RBOHD gene during wounding. The sequence is that of Mitogen-activated protein kinase 8 (MPK8) from Arabidopsis thaliana (Mouse-ear cress).